Reading from the N-terminus, the 1508-residue chain is Gem-associated protein 5 (1508 aa).

Positions 1–124 are important for interaction with U1 snRNA; it reads MGQEPRTLPP…LHWSPRVKDL (124 aa). An interaction with U4 snRNA region spans residues 13–15; it reads NWY. Serine 48 is subject to Phosphoserine. Phosphothreonine is present on threonine 51. WD repeat units follow at residues 62-104, 107-148, 150-189, 193-264, 280-321, 333-374, 377-417, 424-464, 468-509, 533-573, and 576-622; these read GHTE…VVTE, LHQH…QHLF, EPRTIFCLTCSPHHEDLVAIGYKDGIVVIIDISKKGEVIH, GHDD…GVMI, TVKE…RRKY, HSRI…CSWT, SLGG…NNYD, GVKS…PPQI, YHKK…IVLQ, KYKL…LICT, and QHHK…ESSP. Position 624 is a phosphoserine (serine 624). WD repeat units lie at residues 637–677 and 680–720; these read GHTA…PLCN and GHRG…HSRP. The segment at 715–790 is disordered; that stretch reads QDHSRPPQGK…EGEEQAREPE (76 aa). Residues 739–748 show a composition bias toward basic residues; sequence AKPKKKKKPT. Position 751 is a phosphothreonine (threonine 751). Residue lysine 754 forms a Glycyl lysine isopeptide (Lys-Gly) (interchain with G-Cter in SUMO2) linkage. 4 positions are modified to phosphoserine: serine 757, serine 770, serine 778, and serine 847. Disordered stretches follow at residues 1313-1343 and 1389-1428; these read EPSQQLDTASTEETDPETSQPEPNRPSELDL and QKSQLCKSTANGPDKNEPEVEAEQPLCSSQSQCKEEKNEP. A coiled-coil region spans residues 1362-1393; it reads EKHASLQNSQRTVAEVQETLAEMIRQHQKSQL. The segment covering 1390 to 1399 has biased composition (polar residues); sequence KSQLCKSTAN.

The protein belongs to the WD repeat gemin-5 family. Part of the core SMN complex that contains SMN1, GEMIN2/SIP1, DDX20/GEMIN3, GEMIN4, GEMIN5, GEMIN6, GEMIN7, GEMIN8 and STRAP/UNRIP. Part of the SMN-Sm complex that contains SMN1, GEMIN2/SIP1, DDX20/GEMIN3, GEMIN4, GEMIN5, GEMIN6, GEMIN7, GEMIN8, STRAP/UNRIP and the Sm proteins SNRPB, SNRPD1, SNRPD2, SNRPD3, SNRPE, SNRPF and SNRPG. Interacts with GEMIN2; the interaction is direct. Interacts with SMN1, SNRPB, SNRPD1, SNRPD2, SNRPD3 and SNRPE; the interaction is direct. Interacts with cytosolic DDX20/GEMIN3 and GEMIN4. Interacts with SNRNP70 and HNRNPU. Identified in a complex with 80S ribosomes; binds to the 60S large ribosomal subunit. Interacts with the ribosomal subunits RPL3 and RPL4.

It localises to the nucleus. The protein resides in the nucleoplasm. The protein localises to the gem. It is found in the cytoplasm. Functionally, the SMN complex catalyzes the assembly of small nuclear ribonucleoproteins (snRNPs), the building blocks of the spliceosome, and thereby plays an important role in the splicing of cellular pre-mRNAs. Most spliceosomal snRNPs contain a common set of Sm proteins SNRPB, SNRPD1, SNRPD2, SNRPD3, SNRPE, SNRPF and SNRPG that assemble in a heptameric protein ring on the Sm site of the small nuclear RNA to form the core snRNP (Sm core). In the cytosol, the Sm proteins SNRPD1, SNRPD2, SNRPE, SNRPF and SNRPG are trapped in an inactive 6S pICln-Sm complex by the chaperone CLNS1A that controls the assembly of the core snRNP. To assemble core snRNPs, the SMN complex accepts the trapped 5Sm proteins from CLNS1A forming an intermediate. Binding of snRNA inside 5Sm ultimately triggers eviction of the SMN complex, thereby allowing binding of SNRPD3 and SNRPB to complete assembly of the core snRNP. Within the SMN complex, GEMIN5 recognizes and delivers the small nuclear RNAs (snRNAs) to the SMN complex. Binds to the 7-methylguanosine cap of RNA molecules. Binds to the 3'-UTR of SMN1 mRNA and regulates its translation; does not affect mRNA stability. May play a role in the regulation of protein synthesis via its interaction with ribosomes. In Homo sapiens (Human), this protein is Gem-associated protein 5 (GEMIN5).